Consider the following 335-residue polypeptide: Probable nicotianamine synthase 3 (335 aa).

This sequence belongs to the nicotianamine synthase (NAS)-like family.

The enzyme catalyses 3 S-adenosyl-L-methionine = nicotianamine + 3 S-methyl-5'-thioadenosine + 3 H(+). Functionally, synthesizes nicotianamine, a polyamine that is the first intermediate in the synthesis of the phytosiderophores of the mugineic acid type found in gramineae which serves as a sensor for the physiological iron status within the plant, and/or might be involved in the transport of iron. This is Probable nicotianamine synthase 3 (NAS3) from Hordeum vulgare (Barley).